The chain runs to 148 residues: Putative pre-16S rRNA nuclease (148 aa).

The protein belongs to the YqgF nuclease family.

It localises to the cytoplasm. Could be a nuclease involved in processing of the 5'-end of pre-16S rRNA. The sequence is that of Putative pre-16S rRNA nuclease from Chlamydia trachomatis serovar A (strain ATCC VR-571B / DSM 19440 / HAR-13).